A 246-amino-acid chain; its full sequence is Orotidine 5'-phosphate decarboxylase (246 aa).

Substrate contacts are provided by residues Asp-22, Lys-44, 71–80 (DLKFHDIPNT), Thr-131, Arg-192, Gln-201, Gly-221, and Arg-222. The active-site Proton donor is Lys-73.

This sequence belongs to the OMP decarboxylase family. Type 1 subfamily. Homodimer.

It catalyses the reaction orotidine 5'-phosphate + H(+) = UMP + CO2. Its pathway is pyrimidine metabolism; UMP biosynthesis via de novo pathway; UMP from orotate: step 2/2. Its function is as follows. Catalyzes the decarboxylation of orotidine 5'-monophosphate (OMP) to uridine 5'-monophosphate (UMP). The chain is Orotidine 5'-phosphate decarboxylase from Yersinia enterocolitica serotype O:8 / biotype 1B (strain NCTC 13174 / 8081).